The following is a 509-amino-acid chain: Putative (R)-citramalate synthase CimA (509 aa).

The 254-residue stretch at V14–T267 folds into the Pyruvate carboxyltransferase domain.

It belongs to the alpha-IPM synthase/homocitrate synthase family. In terms of assembly, homodimer.

The catalysed reaction is pyruvate + acetyl-CoA + H2O = (3R)-citramalate + CoA + H(+). The protein operates within amino-acid biosynthesis; L-isoleucine biosynthesis; 2-oxobutanoate from pyruvate: step 1/3. Functionally, catalyzes the condensation of pyruvate and acetyl-coenzyme A to form (R)-citramalate. The sequence is that of Putative (R)-citramalate synthase CimA (cimA) from Methanopyrus kandleri (strain AV19 / DSM 6324 / JCM 9639 / NBRC 100938).